The primary structure comprises 258 residues: Tryptophan synthase alpha chain (258 aa).

Catalysis depends on proton acceptor residues glutamate 47 and aspartate 58.

It belongs to the TrpA family. As to quaternary structure, tetramer of two alpha and two beta chains.

The enzyme catalyses (1S,2R)-1-C-(indol-3-yl)glycerol 3-phosphate + L-serine = D-glyceraldehyde 3-phosphate + L-tryptophan + H2O. Its pathway is amino-acid biosynthesis; L-tryptophan biosynthesis; L-tryptophan from chorismate: step 5/5. In terms of biological role, the alpha subunit is responsible for the aldol cleavage of indoleglycerol phosphate to indole and glyceraldehyde 3-phosphate. This Bacillus cereus (strain ZK / E33L) protein is Tryptophan synthase alpha chain.